The primary structure comprises 333 residues: Flotillin-like protein FloA (333 aa).

The helical transmembrane segment at 10 to 30 threads the bilayer; that stretch reads IFLIAGGIIFLVLFFHYVPFF.

Belongs to the flotillin-like FloA family. As to quaternary structure, homooligomerizes.

It is found in the cell membrane. The protein resides in the membrane raft. In terms of biological role, found in functional membrane microdomains (FMM) that may be equivalent to eukaryotic membrane rafts. FMMs are highly dynamic and increase in number as cells age. Flotillins are thought to be important factors in membrane fluidity. In Bacteroides fragilis (strain ATCC 25285 / DSM 2151 / CCUG 4856 / JCM 11019 / LMG 10263 / NCTC 9343 / Onslow / VPI 2553 / EN-2), this protein is Flotillin-like protein FloA.